Here is a 608-residue protein sequence, read N- to C-terminus: Probable methyltransferase PMT3 (608 aa).

At 1-12 (MKGRSDGGQKKR) the chain is on the cytoplasmic side. The helical; Signal-anchor for type II membrane protein transmembrane segment at 13-33 (VIALVCVAAVVLVFVYLFYGS) threads the bilayer. At 34–608 (SDHRASAIEY…LTSESLRDME (575 aa)) the chain is on the lumenal side. N342 carries an N-linked (GlcNAc...) asparagine glycan.

It belongs to the methyltransferase superfamily.

Its subcellular location is the golgi apparatus membrane. This chain is Probable methyltransferase PMT3, found in Arabidopsis thaliana (Mouse-ear cress).